Here is a 238-residue protein sequence, read N- to C-terminus: MILYPAIDLKDGNAVRLLRGEMSDATVFNTDPAAQARAFQDAGCDWLHLVDLNGAFAGEPVNGAAVEAILAATSVPTQLGGGIRDMATIEGWLTRGIARVILGTVAVEDPDLVRQAARAFPGQVAVGIDARKGRVATKGWAEETDVMVTDLARAFEDAGVAAIIYTDIDRDGAMGGPNVSATADLARATSIPVIASGGVSSLDDLHALKTTGVISGAISGRALYDGALDLSEALHALA.

The active-site Proton acceptor is D8. Residue D129 is the Proton donor of the active site.

It belongs to the HisA/HisF family.

Its subcellular location is the cytoplasm. It carries out the reaction 1-(5-phospho-beta-D-ribosyl)-5-[(5-phospho-beta-D-ribosylamino)methylideneamino]imidazole-4-carboxamide = 5-[(5-phospho-1-deoxy-D-ribulos-1-ylimino)methylamino]-1-(5-phospho-beta-D-ribosyl)imidazole-4-carboxamide. It participates in amino-acid biosynthesis; L-histidine biosynthesis; L-histidine from 5-phospho-alpha-D-ribose 1-diphosphate: step 4/9. In Jannaschia sp. (strain CCS1), this protein is 1-(5-phosphoribosyl)-5-[(5-phosphoribosylamino)methylideneamino] imidazole-4-carboxamide isomerase.